The following is a 1057-amino-acid chain: MFKFNIDNPLHKLHKIQSKVSEINTEGGSGGGDGVDEIKTINPATETSLGVVQLSGVLKGTATNPELSFNCVKSNHLSEECVQYNHIQKLSKASLLGQTTKSGGNITEVELNSGLILENGKLSLDLPSIITLSDVMATKSELGVITLGDGGDLNGSPNVNLLENGKISNDPVIGLNKVTYPKIQKVTGKSLLGNSSIFDDNVEEIKIKNGLVLEDSSLSLDVNTLPQASSTTFGVIKLSGDLSGNASSPTIKNQSITSYKLAPLPKHTILGSLDNTLSPTPISLHKSLGVVNEQLKVNPKEIQSTTDSLGTIMLSGDLTGTATNPEISEKSITYSKMQSVNGTKVLLGNLSGTGNISEIEVGDSLILKNGFLDVDLDKLHEESILKVESGGTGNSVLPLGYLKGKEKDPVESVQKIPVTDIFPNVVGSVNGVFPSKPGGNISLIFSNVTTGILSEIPSRQVNGTIYIISGDPTPTNNGRTFISDGTNWNEVTNHLGSTDARYVQLAGSTMSEDASLVFPSTSNIILNQTSFSNKDAVTKEYVDEIKINDATVSSKGILELSGDFDSLSTADNPIIKSATPTVKGKIQLAGDFDPLSTSSLPLIKAASTTSRGKIQLSGDFDPLSTSTNPIIKSATVHSEGKIQLSGDFDSKSTSQFPLIKEASEVHFGKIKLAGDLSGNADAPEIAHNAITYSKIQQASQKSIIGNAINGATDIGEVVIGNGLMLSSGGSLPTVGTLSVDSNTLPKATLNSYGSIQLNGDFNPLSTATAPMIGEGKITYKKMQQISSQRKLLGSASLPIGIQPIQEISVGPSLTYSGAGNNILNASTSFFSGTNPNTSPPTDRPTTSNLLYIGVDGSVWMWNGVHYSKGPGALNVLKSKNLYTIGPLGTPSPLSMSDFDIKVSAGQRIKIKYILNFQSTGGAEYAPSFGWNGVAQEDFFQASIIGFFSSSNTSSSFSTIYQTNTSFTSSSRQVTGGANLFALTSTNADNNLLAWNVGTPEQQLGGIGGQAIPIYITAYYENNTNKETILEIVFNRDLKTQTGQTIQIAGGVADYVTY.

The protein belongs to the IIV-6 261R/396L/443R family.

This is an uncharacterized protein from Acheta domesticus (House cricket).